We begin with the raw amino-acid sequence, 64 residues long: Palmitoyl-CoA hydrolase (64 aa).

It belongs to the type-B carboxylesterase/lipase family. As to quaternary structure, monomer and homotrimer.

The protein resides in the microsome. It is found in the endoplasmic reticulum. The enzyme catalyses hexadecanoyl-CoA + H2O = hexadecanoate + CoA + H(+). In terms of biological role, hydrolysis of a variety of CoA thioesters of long-chain fatty acids. This Rattus norvegicus (Rat) protein is Palmitoyl-CoA hydrolase.